A 280-amino-acid polypeptide reads, in one-letter code: Large ribosomal subunit protein uL2 (280 aa).

Disordered stretches follow at residues 1–59 (MAIR…GGHK) and 223–280 (GVVM…NKKR). Basic residues-rich tracts occupy residues 45–59 (VHGHITTRHKGGGHK) and 269–280 (VRRRRSNKNKKR).

Belongs to the universal ribosomal protein uL2 family. Part of the 50S ribosomal subunit. Forms a bridge to the 30S subunit in the 70S ribosome.

One of the primary rRNA binding proteins. Required for association of the 30S and 50S subunits to form the 70S ribosome, for tRNA binding and peptide bond formation. It has been suggested to have peptidyltransferase activity; this is somewhat controversial. Makes several contacts with the 16S rRNA in the 70S ribosome. This is Large ribosomal subunit protein uL2 from Corynebacterium jeikeium (strain K411).